The primary structure comprises 369 residues: UDP-N-acetylglucosamine--N-acetylmuramyl-(pentapeptide) pyrophosphoryl-undecaprenol N-acetylglucosamine transferase (369 aa).

Residues 10–12 (TAG), Asn-124, Arg-161, Ser-195, and Gln-295 contribute to the UDP-N-acetyl-alpha-D-glucosamine site.

It belongs to the glycosyltransferase 28 family. MurG subfamily.

It is found in the cell membrane. The enzyme catalyses di-trans,octa-cis-undecaprenyl diphospho-N-acetyl-alpha-D-muramoyl-L-alanyl-D-glutamyl-meso-2,6-diaminopimeloyl-D-alanyl-D-alanine + UDP-N-acetyl-alpha-D-glucosamine = di-trans,octa-cis-undecaprenyl diphospho-[N-acetyl-alpha-D-glucosaminyl-(1-&gt;4)]-N-acetyl-alpha-D-muramoyl-L-alanyl-D-glutamyl-meso-2,6-diaminopimeloyl-D-alanyl-D-alanine + UDP + H(+). Its pathway is cell wall biogenesis; peptidoglycan biosynthesis. Functionally, cell wall formation. Catalyzes the transfer of a GlcNAc subunit on undecaprenyl-pyrophosphoryl-MurNAc-pentapeptide (lipid intermediate I) to form undecaprenyl-pyrophosphoryl-MurNAc-(pentapeptide)GlcNAc (lipid intermediate II). This is UDP-N-acetylglucosamine--N-acetylmuramyl-(pentapeptide) pyrophosphoryl-undecaprenol N-acetylglucosamine transferase from Acidothermus cellulolyticus (strain ATCC 43068 / DSM 8971 / 11B).